Reading from the N-terminus, the 277-residue chain is Undecaprenyl-diphosphatase (277 aa).

6 helical membrane-spanning segments follow: residues 44–64 (RAMA…VWEF), 86–106 (GNLL…ADLI), 110–130 (LFNP…MLWA), 184–204 (AATE…AVYS), 215–235 (GDLP…MIAV), and 250–270 (FAWY…FGWV).

The protein belongs to the UppP family.

The protein localises to the cell inner membrane. It carries out the reaction di-trans,octa-cis-undecaprenyl diphosphate + H2O = di-trans,octa-cis-undecaprenyl phosphate + phosphate + H(+). Catalyzes the dephosphorylation of undecaprenyl diphosphate (UPP). Confers resistance to bacitracin. This chain is Undecaprenyl-diphosphatase, found in Pseudomonas putida (strain ATCC 47054 / DSM 6125 / CFBP 8728 / NCIMB 11950 / KT2440).